Here is a 738-residue protein sequence, read N- to C-terminus: Catalase-peroxidase (738 aa).

Basic and acidic residues predominate over residues 1–16; sequence MSENHDAIVTDAKTEE. Positions 1–37 are disordered; that stretch reads MSENHDAIVTDAKTEEAGGCPVAHGRAPHPTQGGGNR. A cross-link (tryptophyl-tyrosyl-methioninium (Trp-Tyr) (with M-257)) is located at residues 108-231; the sequence is WHSAGTYRIS…LGAVQMGLIY (124 aa). The active-site Proton acceptor is the His-109. Positions 231–257 form a cross-link, tryptophyl-tyrosyl-methioninium (Tyr-Met) (with W-108); it reads YVNPEGPNGNPDPIAAARDIRETFGRM. Residue His-272 participates in heme b binding.

Belongs to the peroxidase family. Peroxidase/catalase subfamily. Homodimer or homotetramer. It depends on heme b as a cofactor. Post-translationally, formation of the three residue Trp-Tyr-Met cross-link is important for the catalase, but not the peroxidase activity of the enzyme.

It carries out the reaction H2O2 + AH2 = A + 2 H2O. It catalyses the reaction 2 H2O2 = O2 + 2 H2O. Functionally, bifunctional enzyme with both catalase and broad-spectrum peroxidase activity. The sequence is that of Catalase-peroxidase from Streptomyces ambofaciens.